The chain runs to 442 residues: Serine--tRNA ligase (442 aa).

244-246 (TAE) is an L-serine binding site. 275–277 (RAE) serves as a coordination point for ATP. Glutamate 298 contacts L-serine. 365-368 (EISS) provides a ligand contact to ATP. Serine 400 provides a ligand contact to L-serine.

This sequence belongs to the class-II aminoacyl-tRNA synthetase family. Type-1 seryl-tRNA synthetase subfamily. As to quaternary structure, homodimer. The tRNA molecule binds across the dimer.

The protein resides in the cytoplasm. It catalyses the reaction tRNA(Ser) + L-serine + ATP = L-seryl-tRNA(Ser) + AMP + diphosphate + H(+). It carries out the reaction tRNA(Sec) + L-serine + ATP = L-seryl-tRNA(Sec) + AMP + diphosphate + H(+). It functions in the pathway aminoacyl-tRNA biosynthesis; selenocysteinyl-tRNA(Sec) biosynthesis; L-seryl-tRNA(Sec) from L-serine and tRNA(Sec): step 1/1. Its function is as follows. Catalyzes the attachment of serine to tRNA(Ser). Is also able to aminoacylate tRNA(Sec) with serine, to form the misacylated tRNA L-seryl-tRNA(Sec), which will be further converted into selenocysteinyl-tRNA(Sec). The sequence is that of Serine--tRNA ligase from Bradyrhizobium sp. (strain ORS 278).